A 681-amino-acid chain; its full sequence is Structure-specific endonuclease subunit SLX4 (681 aa).

2 disordered regions span residues 239–305 (EREK…QEQL) and 505–528 (EVTG…NENL). The segment covering 251-261 (SDSSPEPTQLL) has biased composition (polar residues). Residues 265-281 (IIEEEHEVDEEEEDNEN) are compositionally biased toward acidic residues. Composition is skewed to polar residues over residues 288 to 305 (QLAS…QEQL) and 518 to 528 (QVPSSPGNENL).

The protein belongs to the SLX4 family. As to quaternary structure, forms a heterodimer with SLX1. In terms of processing, phosphorylated in response to DNA damage.

It localises to the nucleus. Its function is as follows. Regulatory subunit of the SLX1-SLX4 structure-specific endonuclease that resolves DNA secondary structures generated during DNA repair and recombination. Has endonuclease activity towards branched DNA substrates, introducing single-strand cuts in duplex DNA close to junctions with ss-DNA. The protein is Structure-specific endonuclease subunit SLX4 of Meyerozyma guilliermondii (strain ATCC 6260 / CBS 566 / DSM 6381 / JCM 1539 / NBRC 10279 / NRRL Y-324) (Yeast).